A 275-amino-acid chain; its full sequence is 4-hydroxy-3-methylbut-2-enyl diphosphate reductase (275 aa).

A [4Fe-4S] cluster-binding site is contributed by Cys12. (2E)-4-hydroxy-3-methylbut-2-enyl diphosphate-binding residues include His36 and His70. Dimethylallyl diphosphate contacts are provided by His36 and His70. Isopentenyl diphosphate-binding residues include His36 and His70. A [4Fe-4S] cluster-binding site is contributed by Cys92. Residue His120 participates in (2E)-4-hydroxy-3-methylbut-2-enyl diphosphate binding. His120 is a binding site for dimethylallyl diphosphate. Residue His120 coordinates isopentenyl diphosphate. Glu122 functions as the Proton donor in the catalytic mechanism. A (2E)-4-hydroxy-3-methylbut-2-enyl diphosphate-binding site is contributed by Thr157. Residue Cys185 participates in [4Fe-4S] cluster binding. Positions 213, 214, 215, and 257 each coordinate (2E)-4-hydroxy-3-methylbut-2-enyl diphosphate. Residues Ser213, Ser214, Asn215, and Ser257 each contribute to the dimethylallyl diphosphate site. 4 residues coordinate isopentenyl diphosphate: Ser213, Ser214, Asn215, and Ser257.

This sequence belongs to the IspH family. [4Fe-4S] cluster serves as cofactor.

It catalyses the reaction isopentenyl diphosphate + 2 oxidized [2Fe-2S]-[ferredoxin] + H2O = (2E)-4-hydroxy-3-methylbut-2-enyl diphosphate + 2 reduced [2Fe-2S]-[ferredoxin] + 2 H(+). The enzyme catalyses dimethylallyl diphosphate + 2 oxidized [2Fe-2S]-[ferredoxin] + H2O = (2E)-4-hydroxy-3-methylbut-2-enyl diphosphate + 2 reduced [2Fe-2S]-[ferredoxin] + 2 H(+). It participates in isoprenoid biosynthesis; dimethylallyl diphosphate biosynthesis; dimethylallyl diphosphate from (2E)-4-hydroxy-3-methylbutenyl diphosphate: step 1/1. The protein operates within isoprenoid biosynthesis; isopentenyl diphosphate biosynthesis via DXP pathway; isopentenyl diphosphate from 1-deoxy-D-xylulose 5-phosphate: step 6/6. Functionally, catalyzes the conversion of 1-hydroxy-2-methyl-2-(E)-butenyl 4-diphosphate (HMBPP) into a mixture of isopentenyl diphosphate (IPP) and dimethylallyl diphosphate (DMAPP). Acts in the terminal step of the DOXP/MEP pathway for isoprenoid precursor biosynthesis. The polypeptide is 4-hydroxy-3-methylbut-2-enyl diphosphate reductase (Nitratiruptor sp. (strain SB155-2)).